Here is a 220-residue protein sequence, read N- to C-terminus: Large ribosomal subunit protein uL3 (220 aa).

Residues 61–81 (KGSKSNKYANKPAEGHAKKAD) are disordered.

It belongs to the universal ribosomal protein uL3 family. As to quaternary structure, part of the 50S ribosomal subunit. Forms a cluster with proteins L14 and L19.

One of the primary rRNA binding proteins, it binds directly near the 3'-end of the 23S rRNA, where it nucleates assembly of the 50S subunit. This chain is Large ribosomal subunit protein uL3, found in Staphylococcus epidermidis (strain ATCC 12228 / FDA PCI 1200).